The chain runs to 129 residues: S-adenosylmethionine decarboxylase proenzyme (129 aa).

Catalysis depends on serine 63, which acts as the Schiff-base intermediate with substrate; via pyruvic acid. Residue serine 63 is modified to Pyruvic acid (Ser); by autocatalysis. Residue histidine 68 is the Proton acceptor; for processing activity of the active site. Cysteine 83 serves as the catalytic Proton donor; for catalytic activity.

It belongs to the prokaryotic AdoMetDC family. Type 1 subfamily. Heterotetramer of two alpha and two beta chains arranged as a dimer of alpha/beta heterodimers. Pyruvate is required as a cofactor. Post-translationally, is synthesized initially as an inactive proenzyme. Formation of the active enzyme involves a self-maturation process in which the active site pyruvoyl group is generated from an internal serine residue via an autocatalytic post-translational modification. Two non-identical subunits are generated from the proenzyme in this reaction, and the pyruvate is formed at the N-terminus of the alpha chain, which is derived from the carboxyl end of the proenzyme. The post-translation cleavage follows an unusual pathway, termed non-hydrolytic serinolysis, in which the side chain hydroxyl group of the serine supplies its oxygen atom to form the C-terminus of the beta chain, while the remainder of the serine residue undergoes an oxidative deamination to produce ammonia and the pyruvoyl group blocking the N-terminus of the alpha chain.

The catalysed reaction is S-adenosyl-L-methionine + H(+) = S-adenosyl 3-(methylsulfanyl)propylamine + CO2. It participates in amine and polyamine biosynthesis; S-adenosylmethioninamine biosynthesis; S-adenosylmethioninamine from S-adenosyl-L-methionine: step 1/1. In terms of biological role, catalyzes the decarboxylation of S-adenosylmethionine to S-adenosylmethioninamine (dcAdoMet), the propylamine donor required for the synthesis of the polyamines spermine and spermidine from the diamine putrescine. This Shouchella clausii (strain KSM-K16) (Alkalihalobacillus clausii) protein is S-adenosylmethionine decarboxylase proenzyme.